The sequence spans 282 residues: Anamorsin homolog (282 aa).

Positions 5–151 are N-terminal SAM-like domain; sequence VDTNNFVLLL…EVGAKTALSL (147 aa). Residues 152–196 are linker; sequence SFAPKPAQPKAETSAAQIWTLSAQDIDDEDVDLLDSDTLLDEDDL. The [2Fe-2S] cluster site is built by Cys208, Cys218, Cys221, and Cys223. Residues 208 to 223 are fe-S binding site A; sequence CGPGSGKKKACKNCTC. [4Fe-4S] cluster contacts are provided by Cys243, Cys246, Cys254, and Cys257. Short sequence motifs (cx2C motif) lie at residues 243–246 and 254–257; these read CGSC and CSTC. The segment at 243–257 is fe-S binding site B; the sequence is CGSCYLGDAFRCSTC.

The protein belongs to the anamorsin family. In terms of assembly, monomer. [2Fe-2S] cluster serves as cofactor. It depends on [4Fe-4S] cluster as a cofactor.

Its subcellular location is the cytoplasm. It localises to the mitochondrion intermembrane space. In terms of biological role, component of the cytosolic iron-sulfur (Fe-S) protein assembly (CIA) machinery. Required for the maturation of extramitochondrial Fe-S proteins. Part of an electron transfer chain functioning in an early step of cytosolic Fe-S biogenesis, facilitating the de novo assembly of a [4Fe-4S] cluster on the cytosolic Fe-S scaffold complex. Electrons are transferred from NADPH via a FAD- and FMN-containing diflavin oxidoreductase. Together with the diflavin oxidoreductase, also required for the assembly of the diferric tyrosyl radical cofactor of ribonucleotide reductase (RNR), probably by providing electrons for reduction during radical cofactor maturation in the catalytic small subunit. This Nematostella vectensis (Starlet sea anemone) protein is Anamorsin homolog.